The primary structure comprises 298 residues: Tyrosine recombinase XerD (298 aa).

In terms of domain architecture, Core-binding (CB) spans 3–88 (SSHNNLLQNF…AIRQFYKFLK (86 aa)). A Tyr recombinase domain is found at 109–292 (SIPDYLTQDE…ANKTLREVHK (184 aa)). Residues R149, K173, H244, R247, and H270 contribute to the active site. The active-site O-(3'-phospho-DNA)-tyrosine intermediate is Y279.

The protein belongs to the 'phage' integrase family. XerD subfamily. In terms of assembly, forms a cyclic heterotetrameric complex composed of two molecules of XerC and two molecules of XerD.

It is found in the cytoplasm. Its function is as follows. Site-specific tyrosine recombinase, which acts by catalyzing the cutting and rejoining of the recombining DNA molecules. The XerC-XerD complex is essential to convert dimers of the bacterial chromosome into monomers to permit their segregation at cell division. It also contributes to the segregational stability of plasmids. The protein is Tyrosine recombinase XerD of Leptospira interrogans serogroup Icterohaemorrhagiae serovar copenhageni (strain Fiocruz L1-130).